The following is a 351-amino-acid chain: Quinolinate phosphoribosyltransferase [decarboxylating] 2, mitochondrial (351 aa).

Residues Arg-142, 173–175 (TRK), Arg-197, Lys-207, Glu-240, Asp-267, 299–301 (SGN), and 320–322 (SGA) each bind substrate.

This sequence belongs to the NadC/ModD family.

The protein localises to the mitochondrion. It catalyses the reaction nicotinate beta-D-ribonucleotide + CO2 + diphosphate = quinolinate + 5-phospho-alpha-D-ribose 1-diphosphate + 2 H(+). The protein operates within alkaloid biosynthesis; nicotine biosynthesis. It participates in cofactor biosynthesis; NAD(+) biosynthesis; nicotinate D-ribonucleotide from quinolinate: step 1/1. Its function is as follows. Involved in the biosynthesis of pyridine alkaloid natural products, leading mainly to the production of anabasine, anatabine, nicotine and nornicotine, effective deterrents against herbivores with antiparasitic and pesticide properties (neurotoxins); nornicotine serves as the precursor in the synthesis of the carcinogen compound N'-nitrosonornicotine (NNN). Involved in the catabolism of quinolinic acid (QA). The chain is Quinolinate phosphoribosyltransferase [decarboxylating] 2, mitochondrial from Nicotiana glauca (Glaucous tobacco).